The primary structure comprises 502 residues: Glycerol kinase (502 aa).

T13 serves as a coordination point for ADP. Residues T13, T14, and S15 each coordinate ATP. T13 lines the sn-glycerol 3-phosphate pocket. R17 is an ADP binding site. Sn-glycerol 3-phosphate is bound by residues R83, E84, Y136, and D246. The glycerol site is built by R83, E84, Y136, D246, and Q247. Positions 268 and 311 each coordinate ADP. Positions 268, 311, 315, and 412 each coordinate ATP. Residues G412 and N416 each coordinate ADP.

This sequence belongs to the FGGY kinase family.

The enzyme catalyses glycerol + ATP = sn-glycerol 3-phosphate + ADP + H(+). The protein operates within polyol metabolism; glycerol degradation via glycerol kinase pathway; sn-glycerol 3-phosphate from glycerol: step 1/1. Inhibited by fructose 1,6-bisphosphate (FBP). In terms of biological role, key enzyme in the regulation of glycerol uptake and metabolism. Catalyzes the phosphorylation of glycerol to yield sn-glycerol 3-phosphate. The chain is Glycerol kinase from Francisella tularensis subsp. mediasiatica (strain FSC147).